The chain runs to 380 residues: Probable tRNA-splicing endonuclease subunit sen2 (380 aa).

Residues Tyr-281, His-289, and Lys-325 contribute to the active site.

This sequence belongs to the tRNA-intron endonuclease family. As to quaternary structure, heterotetramer composed of sen2, sen15, sen34 and sen54. Interacts directly with sen54.

The enzyme catalyses pretRNA = a 3'-half-tRNA molecule with a 5'-OH end + a 5'-half-tRNA molecule with a 2',3'-cyclic phosphate end + an intron with a 2',3'-cyclic phosphate and a 5'-hydroxyl terminus.. Functionally, constitutes one of the two catalytic subunit of the tRNA-splicing endonuclease complex, a complex responsible for identification and cleavage of the splice sites in pre-tRNA. It cleaves pre-tRNA at the 5'- and 3'-splice sites to release the intron. The products are an intron and two tRNA half-molecules bearing 2',3'-cyclic phosphate and 5'-OH termini. There are no conserved sequences at the splice sites, but the intron is invariably located at the same site in the gene, placing the splice sites an invariant distance from the constant structural features of the tRNA body. This subunit may anchor the endonuclease complex to the nuclear membrane. Probably carries the active site for 5'-splice site cleavage. In Schizosaccharomyces pombe (strain 972 / ATCC 24843) (Fission yeast), this protein is Probable tRNA-splicing endonuclease subunit sen2 (sen2).